We begin with the raw amino-acid sequence, 804 residues long: Endoplasmin (804 aa).

The signal sequence occupies residues 1 to 21 (MRALWVLGLCCVLLTFGSVRA). Residues 42–44 (SRT) carry the SRT pseudosubstrate motif motif. N-linked (GlcNAc...) asparagine glycosylation occurs at N62. The residue at position 64 (S64) is a Phosphoserine. N-linked (GlcNAc...) asparagine glycosylation occurs at N107. ATP is bound by residues N107, D149, and N162. Residue K168 is modified to N6-(2-hydroxyisobutyryl)lysine. S172 carries the phosphoserine modification. F199 serves as a coordination point for ATP. N217 is a glycosylation site (N-linked (GlcNAc...) asparagine). Position 288 is a phosphothreonine; by CK2 (T288). Residues 288 to 323 (TVEEPMEEEEAAKEEKEDSDDEAAVEEEEEEKKPKT) are disordered. The span at 289–317 (VEEPMEEEEAAKEEKEDSDDEAAVEEEEE) shows a compositional bias: acidic residues. A Phosphoserine; by CK2 modification is found at S306. S403 carries the post-translational modification Phosphoserine. K404 is modified (N6-succinyllysine). An N-linked (GlcNAc...) asparagine glycan is attached at N445. S447 carries the phosphoserine modification. The residue at position 479 (K479) is an N6-acetyllysine. 2 N-linked (GlcNAc...) asparagine glycosylation sites follow: N481 and N502. An N6-succinyllysine modification is found at K633. The interval 750 to 804 (DPDAKVEEEPEEEPEETTEDTTEDTEQDDEEEMDAGTDDEEQETVKKSTAEKDEL) is disordered. Acidic residues predominate over residues 757 to 791 (EEPEEEPEETTEDTTEDTEQDDEEEMDAGTDDEEQ). 4 positions are modified to phosphothreonine; by CK2: T766, T770, T774, and T786. Residues 792 to 804 (ETVKKSTAEKDEL) are compositionally biased toward basic and acidic residues. The Prevents secretion from ER motif lies at 801–804 (KDEL).

This sequence belongs to the heat shock protein 90 family. As to quaternary structure, homodimer; disulfide-linked. Component of an EIF2 complex at least composed of CELF1/CUGBP1, CALR, CALR3, EIF2S1, EIF2S2, HSP90B1 and HSPA5. Part of a large chaperone multiprotein complex comprising DNAJB11, HSP90B1, HSPA5, HYOU, PDIA2, PDIA4, PDIA6, PPIB, SDF2L1, UGGT1 and very small amounts of ERP29, but not, or at very low levels, CALR nor CANX. Interacts with AIMP1; regulates its retention in the endoplasmic reticulum. Hyperglycosylated form interacts with OS9; promoting its degradation by the endoplasmic reticulum associated degradation (ERAD). Interacts with CNPY3. This interaction is disrupted in the presence of ATP. Interacts with TLR4 and TLR9, but not with TLR3. Interacts with MZB1 in a calcium-dependent manner. Interacts with METTL23. Interacts with IL1B; the interaction facilitates cargo translocation into the ERGIC. Interacts with EIF2AK3. In terms of processing, phosphorylated by CK2. N-glycosylated cotranslationally at Asn-217 by STT3A-containing OST-A complex: this glycosylation is constitutive. In response to various stress, 5 additional facultative sites (Asn-62, Asn-107, Asn-445, Asn-481 and Asn-502) can be glycosylated post-translationally by STT3B-containing OST-B complex, leading to a hyperglycosylated form that is degraded by the ER-associated degradation (ERAD) pathway. In normal conditions, the OST-A complex together with CCDC134 prevent glycosylation at facultative sites during protein folding, thereby preventing hyperglycosylation. Mechanistically, nascent HSP90B1 is tethered during translation to a specialized CCDC134-containing translocon that forms a microenvironment for its folding, in which STT3A associates with the SRT pseudosubstrate motif, and prevents access to facultative glycosylation sites until folding is completed, rendering its facultative sites inaccessible to the OST-B complex. Detected in heart muscle (at protein level).

It is found in the endoplasmic reticulum lumen. The protein resides in the sarcoplasmic reticulum lumen. Its subcellular location is the melanosome. It carries out the reaction ATP + H2O = ADP + phosphate + H(+). In terms of biological role, ATP-dependent chaperone involved in the processing of proteins in the endoplasmic reticulum, regulating their transport. Together with MESD, acts as a modulator of the Wnt pathway by promoting the folding of LRP6, a coreceptor of the canonical Wnt pathway. When associated with CNPY3, required for proper folding of Toll-like receptors. Promotes folding and trafficking of TLR4 to the cell surface. May participate in the unfolding of cytosolic leaderless cargos (lacking the secretion signal sequence) such as the interleukin 1/IL-1 to facilitate their translocation into the ERGIC (endoplasmic reticulum-Golgi intermediate compartment) and secretion; the translocation process is mediated by the cargo receptor TMED10. May also function in endoplasmic reticulum associated degradation (ERAD); it is however unclear whether it participates to ERAD or is a target of ERAD. The chain is Endoplasmin (HSP90B1) from Canis lupus familiaris (Dog).